The primary structure comprises 350 residues: Nicotinate-nucleotide--dimethylbenzimidazole phosphoribosyltransferase (350 aa).

The active-site Proton acceptor is Glu317.

It belongs to the CobT family.

It carries out the reaction 5,6-dimethylbenzimidazole + nicotinate beta-D-ribonucleotide = alpha-ribazole 5'-phosphate + nicotinate + H(+). It participates in nucleoside biosynthesis; alpha-ribazole biosynthesis; alpha-ribazole from 5,6-dimethylbenzimidazole: step 1/2. Its function is as follows. Catalyzes the synthesis of alpha-ribazole-5'-phosphate from nicotinate mononucleotide (NAMN) and 5,6-dimethylbenzimidazole (DMB). In Shewanella oneidensis (strain ATCC 700550 / JCM 31522 / CIP 106686 / LMG 19005 / NCIMB 14063 / MR-1), this protein is Nicotinate-nucleotide--dimethylbenzimidazole phosphoribosyltransferase.